Here is a 485-residue protein sequence, read N- to C-terminus: MAAVWQQVLAVDARYNAYRTPTFPQFRTQYIRRRSQLLRENAKAGHPPALRRQYLRLRGQLLGQRYGPLSEPGSARAYSNSIVRSSRTTLDRMEDFEDDPRALGARGHRRSVSRGSYQLQAQMNRAVYEDRPPGSVVPTSAAEASRAMAGDTSLSENYAFAGMYHVFDQHVDEAVPRVRFANDDRHRLACCSLDGSISLCQLVPAPPTVLRVLRGHTRGVSDFAWSLSNDILVSTSLDATMRIWASEDGRCIREIPDPDGAELLCCTFQPVNNNLTVVGNAKHNVHVMNISTGKKVKGGSSKLTGRVLALSFDAPGRLLWAGDDRGSVFSFLFDMATGKLTKAKRLVVHEGSPVTSISARSWVSREARDPSLLINACLNKLLLYRVVDNEGTLQLKRSFPIEQSSHPVRSIFCPLMSFRQGACVVTGSEDMCVHFFDVERAAKAAVNKLQGHSAPVLDVSFNCDESLLASSDASGMVIVWRREQK.

Ser70, Ser74, and Ser79 each carry phosphoserine. Arg114 carries the asymmetric dimethylarginine; alternate modification. Arg114 is modified (omega-N-methylarginine; alternate). WD repeat units lie at residues 170–210, 215–254, 302–341, 406–446, and 451–484; these read HVDE…PTVL, GHTRGVSDFAWSLSNDILVSTSLDATMRIWASEDGRCIRE, KLTGRVLALSFDAPGRLLWAGDDRGSVFSFLFDMATGKLT, HPVR…KAAV, and GHSAPVLDVSFNCDESLLASSDASGMVIVWRREQ.

Its subcellular location is the nucleus. The chain is WD repeat-containing protein 13 (WDR13) from Pongo abelii (Sumatran orangutan).